Consider the following 1291-residue polypeptide: Tat-binding homolog 7 (1291 aa).

The tract at residues 1–345 (MPRSDGFSPR…HNRGERERGR (345 aa)) is disordered. The span at 64 to 82 (RYYEEEYHEAISSEEDERR) shows a compositional bias: basic and acidic residues. Positions 88–99 (SSNSMTYRQQVM) are enriched in polar residues. The segment covering 226–257 (EEEEEGAEEDEQSGEKDPEEEEDDSSNAESSE) has biased composition (acidic residues). The span at 298–311 (NRHHRNRNGSRRRR) shows a compositional bias: basic residues. 432 to 439 (GPPGTGKT) contributes to the ATP binding site. Residues 914 to 1022 (ALQRQMRLFF…DAIDDLIECE (109 aa)) enclose the Bromo domain. The segment at 1110 to 1194 (KSEEGTSTST…MKDASKDSTP (85 aa)) is disordered. Positions 1128-1142 (NKKKLLKKKKGQKKS) are enriched in basic residues. The span at 1148–1164 (EEHDEDSTVEDAGEDTI) shows a compositional bias: acidic residues. A compositionally biased stretch (basic and acidic residues) spans 1168-1190 (LEIKKNQETPNSEHDIEMKDASK).

It belongs to the AAA ATPase family.

In terms of biological role, thought to form a complex that enhances transcription from repetitive DNA sequences by modulating chromatin structure. This Caenorhabditis elegans protein is Tat-binding homolog 7 (lex-1).